The following is a 156-amino-acid chain: Small ribosomal subunit protein uS7 (156 aa).

Belongs to the universal ribosomal protein uS7 family. In terms of assembly, part of the 30S ribosomal subunit. Contacts proteins S9 and S11.

In terms of biological role, one of the primary rRNA binding proteins, it binds directly to 16S rRNA where it nucleates assembly of the head domain of the 30S subunit. Is located at the subunit interface close to the decoding center, probably blocks exit of the E-site tRNA. The chain is Small ribosomal subunit protein uS7 from Streptococcus mutans serotype c (strain ATCC 700610 / UA159).